The following is a 101-amino-acid chain: uncharacterized protein (101 aa).

This is an uncharacterized protein from Mycobacterium tuberculosis (strain CDC 1551 / Oshkosh).